Consider the following 2336-residue polypeptide: Genome polyprotein (2336 aa).

Residues 1–201 (MNTTDCFIAL…WKAKVQKRLK (201 aa)) form the Peptidase C28 domain. The Cytoplasmic portion of the chain corresponds to 1-1481 (MNTTDCFIAL…SFVKRAFKRL (1481 aa)). Catalysis depends on for leader protease activity residues Cys-51, His-148, and Asp-163. 2 disordered regions span residues 197 to 218 (QKRLKGAGQSSPATGSQNQSGN) and 238 to 265 (QLGDNAISGGSNEGSTDTTSTHTTNTQN). A lipid anchor (N-myristoyl glycine; by host) is attached at Gly-202. Composition is skewed to polar residues over residues 204 to 218 (GQSSPATGSQNQSGN) and 238 to 251 (QLGDNAISGGSNEG). Over residues 252 to 265 (STDTTSTHTTNTQN) the composition is skewed to low complexity. Residues 789–797 (ALLRAATYY) are antigenic epitope. The short motif at 869–871 (RGD) is the Cell attachment site element. The SF3 helicase domain occupies 1190–1354 (NVHIANLCKV…DGYKVNNKLD (165 aa)). Position 1218–1225 (1218–1225 (GKSGQGKS)) interacts with ATP. The stretch at 1482 to 1502 (KENFEIVALCLTLLANIVIMI) is an intramembrane region. Over 1503-2336 (RETRKRQQMV…NAVCGDAQSL (834 aa)) the chain is Cytoplasmic. Residues 1556–1591 (PGHRASDDVNSEPARPVEEQPQAEGPYTGPLERQKP) are disordered. O-(5'-phospho-RNA)-tyrosine is present on residues Tyr-1582, Tyr-1605, and Tyr-1629. Residues 1653–1849 (APPTDLQKMV…YCSCVSRSML (197 aa)) form the Peptidase C3 domain. The active-site For protease 3C activity; Proton donor/acceptor is His-1696. Residues Asp-1734 and Cys-1813 each act as for protease 3C activity in the active site. Positions 1879-1887 (MRKTKLAPT) match the Nuclear localization signal motif. The 119-residue stretch at 2097 to 2215 (KNVWDVDYSA…ASDYDLDFEA (119 aa)) folds into the RdRp catalytic domain. Asp-2201 serves as the catalytic For RdRp activity.

This sequence belongs to the picornaviruses polyprotein family. In terms of assembly, interacts with host ISG15. Interacts (via R-G-D motif) with host ITGAV/ITGB6. Interacts with host MAVS; this interaction inhibits binding of host TRAF3 to MAVS, thereby suppressing interferon-mediated responses. As to quaternary structure, forms homooligomers. In terms of assembly, homohexamer. Interacts with host VIM. Interacts with host BECN1. Interacts with host DCTN3. As to quaternary structure, interacts with RNA-dependent RNA polymerase; this interaction allows 3B-1 to binds 2 polymerases and act as a primer. It also allows the recruitment of the RNA-dependent RNA polymerase to host membranes. In terms of assembly, interacts with RNA-dependent RNA polymerase; this interaction allows 3B-2 to act as a primer. Interacts with RNA-dependent RNA polymerase; this interaction allows 3B-3 to act as a primer. As to quaternary structure, interacts with 3B-1; this interaction allows 3B-1 to binds 2 polymerases and act as a primer. It also allows the recruitment of the RNA-dependent RNA polymerase to host membranes. Interacts with 3B-2; this interaction allows 3B-2 to act as a primer. Interacts with 3B-3; this interaction allows 3B-3 to act as a primer. In terms of processing, removes six residues from its own C-terminus, generating sLb(pro). Post-translationally, specific enzymatic cleavages in vivo by the viral proteases yield a variety of precursors and mature proteins. The polyprotein seems to be cotranslationally cleaved at the 2A/2B junction by a ribosomal skip from one codon to the next without formation of a peptide bond. This process would release the L-P1-2A peptide from the translational complex. During virion maturation, immature virions are rendered infectious following cleavage of VP0 into VP4 and VP2. This maturation seems to be an autocatalytic event triggered by the presence of RNA in the capsid and is followed by a conformational change of the particle. In terms of processing, myristoylation is required during RNA encapsidation and formation of the mature virus particle. Post-translationally, uridylylated by the polymerase and covalently linked to the 5'-end of genomic RNA. These uridylylated forms act as a nucleotide-peptide primer for the polymerase.

The protein resides in the host nucleus. The protein localises to the host cytoplasm. Its subcellular location is the virion. It is found in the host endoplasmic reticulum membrane. It localises to the host cytoplasmic vesicle membrane. The enzyme catalyses Autocatalytically cleaves itself from the polyprotein of the foot-and-mouth disease virus by hydrolysis of a Lys-|-Gly bond, but then cleaves host cell initiation factor eIF-4G at bonds -Gly-|-Arg- and -Lys-|-Arg-.. The catalysed reaction is a ribonucleoside 5'-triphosphate + H2O = a ribonucleoside 5'-diphosphate + phosphate + H(+). It catalyses the reaction RNA(n) + a ribonucleoside 5'-triphosphate = RNA(n+1) + diphosphate. It carries out the reaction Selective cleavage of Gln-|-Gly bond in the poliovirus polyprotein. In other picornavirus reactions Glu may be substituted for Gln, and Ser or Thr for Gly.. Functionally, autocatalytically cleaves itself from the polyprotein at the L/VP0 junction. Also cleaves the host translation initiation factors EIF4G1 and EIF4G3, in order to shut off the capped cellular mRNA transcription. Plays a role in counteracting host innate antiviral response using diverse mechanisms. Possesses a deubiquitinase activity acting on both 'Lys-48' and 'Lys-63'-linked polyubiquitin chains. In turn, inhibits the ubiquitination and subsequent activation of key signaling molecules of type I IFN response such as host RIGI, TBK1, TRAF3 and TRAF6. Inhibits host NF-kappa-B activity by inducing a decrease in RELA mRNA levels. Cleaves a peptide bond in the C-terminus of host ISG15, resulting in the damaging of this modifier that can no longer be attached to target proteins. Also cleaves host G3BP1 and G3BP2 in order to inhibit cytoplasmic stress granules assembly. Lies on the inner surface of the capsid shell. After binding to the host receptor, the capsid undergoes conformational changes. Capsid protein VP4 is released, capsid protein VP1 N-terminus is externalized, and together, they shape a pore in the host membrane through which the viral genome is translocated into the host cell cytoplasm. After genome has been released, the channel shrinks. Its function is as follows. Forms an icosahedral capsid of pseudo T=3 symmetry with capsid proteins VP1 and VP3. The capsid is composed of 60 copies of each capsid protein organized in the form of twelve pentamers and encloses the viral positive strand RNA genome. Upon acidifcation in the endosome, dissociates into pentamers. In terms of biological role, forms an icosahedral capsid of pseudo T=3 symmetry with capsid proteins VP0 and VP3. The capsid is composed of 60 copies of each capsid protein organized in the form of twelve pentamers and encloses the viral positive strand RNA genome. Upon acidifcation in the endosome, dissociates into pentamers. Functionally, forms an icosahedral capsid of pseudo T=3 symmetry with capsid proteins VP2 and VP3. The capsid is composed of 60 copies of each capsid protein organized in the form of twelve pentamers and encloses the viral positive strand RNA genome. Mediates cell entry by attachment to an integrin receptor, usually host ITGAV/ITGB6. In addition, targets host MAVS to suppress type I IFN pathway. Upon acidifcation in the endosome, dissociates into pentamers. Mediates self-processing of the polyprotein by a translational effect termed 'ribosome skipping'. Mechanistically, 2A-mediated cleavage occurs between the C-terminal glycine and the proline of the downstream protein 2B. In the case of foot-and-mouth disease virus, the 2A oligopeptide is post-translationally 'trimmed' from the C-terminus of the upstream protein 1D by 3C proteinase. Its function is as follows. Plays an essential role in the virus replication cycle by acting as a viroporin. Creates a pore in the host endoplasmic reticulum and as a consequence releases Ca2+ in the cytoplasm of infected cell. In turn, high levels of cytoplasmic calcium may trigger membrane trafficking and transport of viral ER-associated proteins to viroplasms, sites of viral genome replication. In terms of biological role, associates with and induces structural rearrangements of intracellular membranes. Triggers host autophagy by interacting with host BECN1 and thereby promotes viral replication. Participates in viral replication and interacts with host DHX9. Displays RNA-binding, nucleotide binding and NTPase activities. May play a role in virion morphogenesis and viral RNA encapsidation by interacting with the capsid protein VP3. Functionally, plays important roles in virus replication, virulence and host range. Cooperates with host DDX56 to inhibit IRF3 nuclear translocation and subsequent type I interferon production. Covalently linked to the 5'-end of both the positive-strand and negative-strand genomic RNAs. Acts as a genome-linked replication primer. Its function is as follows. Cysteine protease that generates mature viral proteins from the precursor polyprotein. In addition to its proteolytic activity, binds to viral RNA and thus influences viral genome replication. RNA and substrate bind cooperatively to the protease. In terms of biological role, RNA-directed RNA polymerase 3D-POL replicates genomic and antigenomic RNA by recognizing replications specific signals. Covalently attaches UMP to a tyrosine of VPg, which is used to prime RNA synthesis. The positive stranded RNA genome is first replicated at virus induced membranous vesicles, creating a dsRNA genomic replication form. This dsRNA is then used as template to synthesize positive stranded RNA genomes. ss(+)RNA genomes are either translated, replicated or encapsidated. This is Genome polyprotein from Foot-and-mouth disease virus (isolate -/Azerbaijan/A22-550/1965 serotype A) (FMDV).